The chain runs to 272 residues: Alkaline ceramidase (272 aa).

A run of 2 helical transmembrane segments spans residues 34–54 and 61–81; these read FANT…IMLL and VNGG…ASTY. Zn(2+) is bound at residue H83. Helical transmembrane passes span 96–116, 124–144, 148–168, and 183–203; these read LSLV…MKWF, LTVV…LCFL, LNAI…RYEG, and ILAL…LCDF. Zn(2+) contacts are provided by H213 and H217. The helical transmembrane segment at 214–234 threads the bilayer; that stretch reads ALFHLLAGLAGYTIFIMFSMI. Residue N256 is glycosylated (N-linked (GlcNAc...) asparagine).

The protein belongs to the alkaline ceramidase family. Zn(2+) is required as a cofactor.

The protein resides in the membrane. The catalysed reaction is an N-acylsphing-4-enine + H2O = sphing-4-enine + a fatty acid. Functionally, hydrolyzes the sphingolipid ceramide into sphingosine and free fatty acid. The chain is Alkaline ceramidase from Caenorhabditis briggsae.